Consider the following 320-residue polypeptide: ATP-dependent 6-phosphofructokinase (320 aa).

Gly-12 is an ATP binding site. ADP is bound by residues 22 to 26 (RGVVR) and 55 to 60 (RYSVSD). Residues 73–74 (RF) and 103–106 (GDGS) contribute to the ATP site. Asp-104 serves as a coordination point for Mg(2+). 126 to 128 (TID) is a binding site for substrate. Asp-128 acts as the Proton acceptor in catalysis. Arg-155 lines the ADP pocket. Residues Arg-163 and 170-172 (MGR) contribute to the substrate site. Residues 186-188 (GCE), Lys-212, and 214-216 (KKH) contribute to the ADP site. Substrate is bound by residues Glu-223, Arg-244, and 250–253 (HIQR).

This sequence belongs to the phosphofructokinase type A (PFKA) family. ATP-dependent PFK group I subfamily. Prokaryotic clade 'B1' sub-subfamily. In terms of assembly, homotetramer. Mg(2+) serves as cofactor.

It is found in the cytoplasm. The catalysed reaction is beta-D-fructose 6-phosphate + ATP = beta-D-fructose 1,6-bisphosphate + ADP + H(+). It participates in carbohydrate degradation; glycolysis; D-glyceraldehyde 3-phosphate and glycerone phosphate from D-glucose: step 3/4. Its activity is regulated as follows. Allosterically activated by ADP and other diphosphonucleosides, and allosterically inhibited by phosphoenolpyruvate. Catalyzes the phosphorylation of D-fructose 6-phosphate to fructose 1,6-bisphosphate by ATP, the first committing step of glycolysis. The polypeptide is ATP-dependent 6-phosphofructokinase (Escherichia fergusonii (strain ATCC 35469 / DSM 13698 / CCUG 18766 / IAM 14443 / JCM 21226 / LMG 7866 / NBRC 102419 / NCTC 12128 / CDC 0568-73)).